The primary structure comprises 546 residues: Tegument protein UL21 homolog (546 aa).

This sequence belongs to the alphaherpesvirinae HHV-1 UL21 protein family.

It is found in the virion tegument. It localises to the host cytoplasm. The protein localises to the host nucleus. Functionally, may facilitate the viral transport through neural circuits. The polypeptide is Tegument protein UL21 homolog (MDV033) (Gallus gallus (Chicken)).